Reading from the N-terminus, the 35-residue chain is Beta-theraphotoxin-Hlv1a (35 aa).

3 cysteine pairs are disulfide-bonded: Cys2-Cys17, Cys9-Cys24, and Cys16-Cys31.

The protein belongs to the neurotoxin 10 (Hwtx-1) family. 10 (haplotoxin-1) subfamily. In terms of tissue distribution, expressed by the venom gland.

The protein localises to the secreted. Functionally, spider venom neurotoxin that blocks voltage-gated sodium channel Nav1.3/SCN3A in human (IC(50)=1 uM) and rat (IC(50)=1 uM). In Cyriopagopus lividus (Cobalt blue tarantula), this protein is Beta-theraphotoxin-Hlv1a.